A 37-amino-acid polypeptide reads, in one-letter code: Large ribosomal subunit protein bL36c (37 aa).

Belongs to the bacterial ribosomal protein bL36 family.

It is found in the plastid. It localises to the chloroplast. This chain is Large ribosomal subunit protein bL36c, found in Psilotum nudum (Whisk fern).